We begin with the raw amino-acid sequence, 1047 residues long: Atrial natriuretic peptide receptor 2 (1047 aa).

The N-terminal stretch at 1-16 (MALPSLLLVVAALAGG) is a signal peptide. Topologically, residues 17–458 (VRPPGARNLT…DKTPLSTLAI (442 aa)) are extracellular. N-linked (GlcNAc...) asparagine glycans are attached at residues Asn-24 and Asn-35. A disulfide bridge links Cys-75 with Cys-101. N-linked (GlcNAc...) asparagine glycans are attached at residues Asn-161, Asn-195, Asn-244, Asn-277, and Asn-349. A helical membrane pass occupies residues 459–478 (VALGTGITFIMFGVSSFLIF). The Cytoplasmic segment spans residues 479–1047 (RKLMLEKELA…GERKGPAGLL (569 aa)). Ser-513 carries the phosphoserine modification. The 274-residue stretch at 513-786 (SRLTLSLRGS…PDFGQIKGFI (274 aa)) folds into the Protein kinase domain. Thr-516 is subject to Phosphothreonine. A phosphoserine mark is found at Ser-518, Ser-522, Ser-523, and Ser-526. Thr-529 is modified (phosphothreonine). In terms of domain architecture, Guanylate cyclase spans 861–991 (TIYFSDIVGF…DTVNTASRME (131 aa)).

This sequence belongs to the adenylyl cyclase class-4/guanylyl cyclase family. In terms of processing, phosphorylated. Phosphorylation of the protein kinase-like domain is required for full activation by CNP. Post-translationally, glycosylated.

The protein localises to the cell membrane. The enzyme catalyses GTP = 3',5'-cyclic GMP + diphosphate. Receptor for the C-type natriuretic peptide NPPC/CNP hormone. Has guanylate cyclase activity upon binding of its ligand. May play a role in the regulation of skeletal growth. The chain is Atrial natriuretic peptide receptor 2 (NPR2) from Bos taurus (Bovine).